The primary structure comprises 255 residues: Coenzyme F420:L-glutamate ligase (255 aa).

GTP-binding positions include 11–14 (IPLI), 40–41 (ST), and lysine 45. Aspartate 109 provides a ligand contact to a divalent metal cation. A GTP-binding site is contributed by asparagine 112. Residues aspartate 150, threonine 151, and glutamate 208 each contribute to the a divalent metal cation site. 206 to 213 (MGEGAGGT) lines the GTP pocket.

This sequence belongs to the CofE family. As to quaternary structure, homodimer. Mg(2+) serves as cofactor. Requires Mn(2+) as cofactor. The cofactor is K(+).

It catalyses the reaction oxidized coenzyme F420-0 + GTP + L-glutamate = oxidized coenzyme F420-1 + GDP + phosphate + H(+). It carries out the reaction oxidized coenzyme F420-1 + GTP + L-glutamate = oxidized coenzyme F420-2 + GDP + phosphate + H(+). It functions in the pathway cofactor biosynthesis; coenzyme F420 biosynthesis. Its function is as follows. Catalyzes the GTP-dependent successive addition of two or more gamma-linked L-glutamates to the L-lactyl phosphodiester of 7,8-didemethyl-8-hydroxy-5-deazariboflavin (F420-0) to form coenzyme F420-0-glutamyl-glutamate (F420-2) or polyglutamated F420 derivatives. The sequence is that of Coenzyme F420:L-glutamate ligase from Methanosarcina barkeri (strain Fusaro / DSM 804).